Reading from the N-terminus, the 332-residue chain is 3-ketodihydrosphingosine reductase (332 aa).

A signal peptide spans 1 to 25; it reads MLLLAAASLVAFVLLLYMVSPLISP. Topologically, residues 26 to 269 are cytoplasmic; sequence KPLALPGAHV…QGNFNSSIGS (244 aa). NADPH is bound by residues G39, S41, S42, G43, R64, K68, and D93. The GXSXG signature appears at 39-43; sequence GGSSG. Residue S172 is the Proton donor of the active site. The active-site Proton acceptor is the Y186. Positions 186 and 190 each coordinate NADP(+). Catalysis depends on K190, which acts as the Lowers pKa of active site Tyr. The chain crosses the membrane as a helical span at residues 270 to 290; it reads DGYMLSSLTCGMAPVTSIMEG. Residues 291-292 lie on the Lumenal side of the membrane; sequence LQ. A helical transmembrane segment spans residues 293 to 313; it reads QVVTMGLFRTIALFYLGSFDS. At 314–331 the chain is on the cytoplasmic side; sequence IVRRCMMQKAKLETVDKT.

The protein belongs to the short-chain dehydrogenases/reductases (SDR) family.

It is found in the endoplasmic reticulum membrane. The enzyme catalyses sphinganine + NADP(+) = 3-oxosphinganine + NADPH + H(+). The protein operates within lipid metabolism; sphingolipid metabolism. Catalyzes the reduction of 3'-oxosphinganine (3-ketodihydrosphingosine/KDS) to sphinganine (dihydrosphingosine/DHS), the second step of de novo sphingolipid biosynthesis. The protein is 3-ketodihydrosphingosine reductase (KDSR) of Bos taurus (Bovine).